Here is a 145-residue protein sequence, read N- to C-terminus: Large-conductance mechanosensitive channel (145 aa).

3 consecutive transmembrane segments (helical) span residues 14 to 34, 38 to 58, and 81 to 101; these read VMDL…VKSL, LIMP…YFLP, and GSFL…FLMV.

It belongs to the MscL family. Homopentamer.

Its subcellular location is the cell inner membrane. In terms of biological role, channel that opens in response to stretch forces in the membrane lipid bilayer. May participate in the regulation of osmotic pressure changes within the cell. The sequence is that of Large-conductance mechanosensitive channel from Rhizobium etli (strain CIAT 652).